Consider the following 161-residue polypeptide: Large ribosomal subunit protein uL15 (161 aa).

The segment at 1-42 (MKLSDIADNAGSRKKRMRVGRGIGSGKGKQSGRGGKGQTARS) is disordered. Gly residues predominate over residues 21–37 (RGIGSGKGKQSGRGGKG).

This sequence belongs to the universal ribosomal protein uL15 family. As to quaternary structure, part of the 50S ribosomal subunit.

Its function is as follows. Binds to the 23S rRNA. In Bradyrhizobium diazoefficiens (strain JCM 10833 / BCRC 13528 / IAM 13628 / NBRC 14792 / USDA 110), this protein is Large ribosomal subunit protein uL15.